The primary structure comprises 339 residues: Lipoate--protein ligase (339 aa).

Positions 31-221 (FLDDDILFPY…QLLQIETISQ (191 aa)) constitute a BPL/LPL catalytic domain. ATP-binding positions include Arg-73, 78–81 (GAVY), Lys-135, and Ala-139. Lys-135 lines the (R)-lipoate pocket.

It belongs to the LplA family.

The enzyme catalyses L-lysyl-[lipoyl-carrier protein] + (R)-lipoate + ATP = N(6)-[(R)-lipoyl]-L-lysyl-[lipoyl-carrier protein] + AMP + diphosphate + H(+). The protein operates within protein modification; protein lipoylation via exogenous pathway; protein N(6)-(lipoyl)lysine from lipoate: step 1/2. Its pathway is protein modification; protein lipoylation via exogenous pathway; protein N(6)-(lipoyl)lysine from lipoate: step 2/2. Functionally, catalyzes specifically the lipoylation of GcvH-L (SpyM50867), likely via the ATP-dependent activation of lipoate to lipoyl-AMP and the transfer of the activated lipoyl onto the lipoyl domain of the target protein. This is Lipoate--protein ligase from Streptococcus pyogenes serotype M5 (strain Manfredo).